Consider the following 390-residue polypeptide: Neuromedin-B receptor (390 aa).

Residues 1–44 (MPPKSLSNLSQTAGVNQSGFFPGASERDFLPATDRTTAEFVIRC) lie on the Extracellular side of the membrane. Residues Asn8 and Asn16 are each glycosylated (N-linked (GlcNAc...) asparagine). Residues 45–65 (VIPSLYLLIITVGLLGNIVLV) traverse the membrane as a helical segment. At 66–76 (KIFLTNSAMRS) the chain is on the cytoplasmic side. The helical transmembrane segment at 77-97 (VPNIFISNLAAGDVLLLLTCV) threads the bilayer. The Extracellular segment spans residues 98-117 (PVDASRYFLDEWMFGKVGCK). Cys116 and Cys198 are oxidised to a cystine. Residues 118–138 (LIPVIQLTSVGVSVFTLTALS) traverse the membrane as a helical segment. Residues 139-155 (ADRYRAIVNPMDIQTSG) lie on the Cytoplasmic side of the membrane. Residues 156 to 176 (AVLWTCVKAGGIWVVSVLLAV) form a helical membrane-spanning segment. The Extracellular portion of the chain corresponds to 177–210 (PEAVFSEVARIDGLDNGSFTACIPYPQTDELHPK). The N-linked (GlcNAc...) asparagine glycan is linked to Asn192. A helical membrane pass occupies residues 211-231 (IHSVLIFLVYFLIPLGIISVY). At 232–266 (YYHIAKTLIKSAHNLPGEYNEHTKKQMETRKRLAK) the chain is on the cytoplasmic side. Residues 267–287 (IVLVFVGCFVFCWFPNHILYM) form a helical membrane-spanning segment. The Extracellular portion of the chain corresponds to 288–305 (YRSFNYNEIDPSLGHMIV). A helical transmembrane segment spans residues 306-328 (TLVARVLSFCNSCVNPFALYLLS). At 329–390 (ESFRKHFNNQ…GHSVKQEMAL (62 aa)) the chain is on the cytoplasmic side. The S-palmitoyl cysteine moiety is linked to residue Cys341. Ser352 bears the Phosphoserine mark.

It belongs to the G-protein coupled receptor 1 family. Highly expressed in peripheral tissues where it is detected in the respiratory system, circulatory system, digestive system, urogenital system, lymphatic organs and endocrine system (at protein level). In the testis, expressed mainly in Leydig cells (at protein level).

The protein resides in the cell membrane. Receptor for neuromedin-B. Contributes to the maintenance of basal sigh rate through signaling in the pre-Botzinger complex, a cluster of several thousand neurons in the ventrolateral medulla responsible for inspiration during respiratory activity. Contributes to the induction of sneezing following exposure to chemical irritants or allergens which causes release of NMB by nasal sensory neurons and activation of NMBR-expressing neurons in the sneeze-evoking region of the brainstem. These in turn activate neurons of the caudal ventral respiratory group, giving rise to the sneezing response. Contributes to induction of acute itch, possibly through its activation on dorsal root ganglion neurons by the NMB peptide. Plays a role in the innate immune response to influenza A virus infection by enhancing interferon alpha expression and reducing expression of IL6. Plays a role in CSF1-induced proliferation of osteoclast precursors by contributing to the positive regulation of the expression of the CSF1 receptor CSF1R. The polypeptide is Neuromedin-B receptor (NMBR) (Sus scrofa (Pig)).